We begin with the raw amino-acid sequence, 563 residues long: F-box/kelch-repeat protein At5g42360 (563 aa).

The 47-residue stretch at 129 to 175 folds into the F-box domain; it reads YRKHVYLPDDILEMCLMRLPLTSLLNAHLVCKKWQSMANTQRFLQMR. Kelch repeat units lie at residues 184 to 231, 232 to 282, and 355 to 402; these read WLFL…SIHE, EIYI…ATEV, and VLIA…IICN.

This chain is F-box/kelch-repeat protein At5g42360, found in Arabidopsis thaliana (Mouse-ear cress).